Here is a 247-residue protein sequence, read N- to C-terminus: MKFFQEKISIKETNILLKVDNPKFFKIAKNTIINERFNLENYILRNPIFLTSYSPVEVLDNAPKIVKLMAEAGFNADVGPMAAVAGTFSQLIVENLIENDCKNAISENGGDICLKCEMDTTVGLYAGNSSLSGSLGFKLKKEKIKNGYGICTSSGTVGHSVSLGNADSVTVFSKSASIADAAATSIGNFAVGNNVDAINKCLEKAENIPKIDGVFVCMGEHAGKIGKIPQFIKTDKKEGLGNVFEMF.

Belongs to the UPF0280 family.

The polypeptide is UPF0280 protein MmarC7_0482 (Methanococcus maripaludis (strain C7 / ATCC BAA-1331)).